The primary structure comprises 503 residues: MDFSIKGCDWSKGEAKGFLTGKSDCIVLGIFEAQTLSGAALDIDTATKGLISRVVKAGDMDGKRGKTLFLPEVSGIGASRVLLVGLGKQDAFNQKAYNDAATAAWRALLATKVVQVTFSLAQLPVDERSSDWGVRAAILALRNETYRFTQMKSKPEPASHTLKRVVFSVDPADEKAAKVAIKQAVALANGMDLTRDLGNLPGNVCTPTYLGNTAKKIAKDWGLKAEVLGLKQIQALKMGSFLSVARASVEPPQFIVLHYQGAAAKAAPVVLVGKGITFDTGGISLKPGEGMDEMKYDMCGAGSVLGTIRAVAEMGLKINVVAIVPTCENMPGGNATKPGDIVTSMKGLTIEVLNTDAEGRLILCDALTYAERFKPAAVIDVATLTGACVIALGGHNSGLFSTNDALAGELLDASREANDPAWRMPLDDEYQDQLKSNFADLANIGGRPAGAVTAACFLSRFTESYPWAHLDIAGTAWKGGAAKGATGRPVPLLAQFLIDRAGQ.

The Mn(2+) site is built by Lys-274 and Asp-279. Lys-286 is an active-site residue. Mn(2+)-binding residues include Asp-297, Asp-356, and Glu-358. Residue Arg-360 is part of the active site.

Belongs to the peptidase M17 family. The cofactor is Mn(2+).

The protein resides in the cytoplasm. The enzyme catalyses Release of an N-terminal amino acid, Xaa-|-Yaa-, in which Xaa is preferably Leu, but may be other amino acids including Pro although not Arg or Lys, and Yaa may be Pro. Amino acid amides and methyl esters are also readily hydrolyzed, but rates on arylamides are exceedingly low.. It carries out the reaction Release of an N-terminal amino acid, preferentially leucine, but not glutamic or aspartic acids.. In terms of biological role, presumably involved in the processing and regular turnover of intracellular proteins. Catalyzes the removal of unsubstituted N-terminal amino acids from various peptides. The chain is Probable cytosol aminopeptidase from Burkholderia orbicola (strain MC0-3).